Here is a 63-residue protein sequence, read N- to C-terminus: Omega-conotoxin Eu1.6 (63 aa).

An N-terminal signal peptide occupies residues 1 to 21 (MGMRMMFTVFLLVVLATTVVS). Residues 22 to 47 (FTSDRAPDGRNAAAKAFGLITPTVRK) constitute a propeptide that is removed on maturation. 2 cysteine pairs are disulfide-bonded: Cys-49-Cys-55 and Cys-50-Cys-63. A ser-Xaa-Pro motif, crucial for potent interaction with nAChR region spans residues 51–53 (SNP).

It belongs to the conotoxin A superfamily. In terms of tissue distribution, expressed by the venom duct.

Its subcellular location is the secreted. This amidated peptide potently and teversibly inhibits Cav2.2/CACNA1B. Steady-state inactivation is enhanced at hyperpolarized membrane potentials. Also shows a weak interaction at alpha-3-beta-4/ CHRNA3-CHRNB4 and alpha-7/CHRNA7 nAChRs subtypes. In vivo, exhibits a potent analgesic activity in rat partial sciatic nerve injury and chronic constriction injury models. In Conus eburneus (Ivory cone), this protein is Omega-conotoxin Eu1.6.